The primary structure comprises 222 residues: V-type ATP synthase subunit D (222 aa).

The protein belongs to the V-ATPase D subunit family.

Produces ATP from ADP in the presence of a proton gradient across the membrane. The polypeptide is V-type ATP synthase subunit D (Deinococcus geothermalis (strain DSM 11300 / CIP 105573 / AG-3a)).